Reading from the N-terminus, the 3471-residue chain is Abnormal spindle-like microcephaly-associated protein homolog (3471 aa).

Residues 1–26 form a disordered region; that stretch reads MANRRVGRGCWEVSPTERRPPAAEEE. Ser274, Ser277, Ser361, Ser386, and Ser419 each carry phosphoserine. Positions 555–564 are enriched in polar residues; it reads EVTPSSTTAS. The tract at residues 555–576 is disordered; sequence EVTPSSTTASVARKRKSDGSME. At Ser599 the chain carries Phosphoserine. The Calponin-homology (CH) 1 domain maps to 914–1050; that stretch reads KASKEILLAF…LLWKIAFAFQ (137 aa). Residues 1051–1072 adopt a coiled-coil conformation; sequence VDISLNLDQLKEEIAFLKHTKS. The residue at position 1097 (Ser1097) is a Phosphoserine. One can recognise a Calponin-homology (CH) 2 domain in the interval 1104 to 1255; sequence SENIKLLMDW…YLSFLCARLL (152 aa). IQ domains follow at residues 1341 to 1372, 1387 to 1416, 1576 to 1607, 1599 to 1628, 1626 to 1655, 1649 to 1678, 1722 to 1751, 1745 to 1776, 1795 to 1824, 1818 to 1847, 1868 to 1897, 1891 to 1922, 1941 to 1972, 1964 to 1995, 2014 to 2043, 2037 to 2068, 2087 to 2118, 2110 to 2141, 2160 to 2191, 2183 to 2212, 2233 to 2264, 2256 to 2287, 2305 to 2336, 2378 to 2409, 2401 to 2432, 2451 to 2482, 2524 to 2555, 2659 to 2690, 2682 to 2713, 2732 to 2761, 2853 to 2884, 2903 to 2932, 2926 to 2957, 2948 to 2979, 3023 to 3054, 3073 to 3104, 3134 to 3163, 3175 to 3204, and 3198 to 3229; these read QNKAASLIQGYWRRYSTRRRFLKLKYYSIILQ, YLWATVTIQRHWRAYLRRKQDQQRYEMLKS, LKKTIIKLQAHVRKHQQLQKYKKMKKAAVIIQ, MKKAAVIIQTHFRAYIFARKVLASYQKTRS, TRSAVIVLQSAYRGMQARKMYIHILTSVIK, ILTSVIKIQSYYRAYVSKKEFLSLKNATIK, MRESCIKLQAFVRGYRVRKQMRLQRKAVIS, QRKAVISLQSYFRMRKARQYYLKMYKAIIVIQ, VKKAATCLQAAYRGYKVRQLIKQQSIAALK, QSIAALKIQSAFRGYNKRIKYQSVLQSIIK, TKAAVISLQSTYRGWKVRKQIRREHQAALK, EHQAALKIQSAFRMAKARKQFRLFKTAALVIQ, LRHAVLMLQSMWKGKTLRRQLQRQHKCAIIIQ, QHKCAIIIQSYYRMHVQQKKWKIMKKAALLIQ, TKAAVVTLQSAYRGMKVRKRIKDCNKAAVT, CNKAAVTIQSKYRAYKTKKKYATYRASAIIIQ, LKKTAIKIQSVYRGIRVRRHIQHMHRAATFIK, MHRAATFIKAMFKMHQSRISYHTMRKAAIVIQ, ILKAVKILQASFRGVRVRRTLRKMQIAATLIQ, MQIAATLIQSNYRRYRQQTYFNKLKKITKT, LRHSVIYIQAIFRGKKARRHLKMMHIAATLIQ, MHIAATLIQRRFRTLMMRRRFLSLKKTAIWIQ, VQNAVIKIQSSYRRWMIRKRMREMHRAATFIQ, QRHSAVILQAAFRGMKTRRHLKSMHSSATLIQ, MHSSATLIQSRFRSLLVRRRFISLKKATIFVQ, LRKSAITIQSSYRRLMVKKKLQEMQRAAVLIQ, QWHSAVVIQAAYKGMKARQLLREKHKAAIIIQ, RTQAVICIQSYYRGFKVRKDIQNMHRAATLIQ, MHRAATLIQSFYRMHRAKVDYQTKKTAIVVIQ, VQKSVRTIQPAFRGMKVRQKLKNLSEEKMA, QKRAAITLQHYFRTWQTRKQFLLYRKAAVVLQ, IRSSVIIIQARSKGFIQKRKFQEIKNSTIK, IKNSTIKIQAIWRRYRAKKYLCKVKAACKIQA, KVKAACKIQAWYRCWRAHKEYLAILKAVKIIQ, RHRATCLIQAHYRGYKGRQVFLRQKSAALVIQ, FKKSTVILQALVRGWLVRKRILEQRAKIRLLH, QVNSVICIQRWFRARLQRKRFIQKYHSIKK, QNRAASVIQKAVRHFLLRKKQEKFTSGIIK, and FTSGIIKIQALWRGYSWRKKNDCTKIKAIRLS.

The protein resides in the cytoplasm. The protein localises to the cytoskeleton. Its subcellular location is the spindle. It localises to the nucleus. Its function is as follows. Probable role in mitotic spindle regulation and coordination of mitotic processes. May have a preferential role in regulating neurogenesis. The polypeptide is Abnormal spindle-like microcephaly-associated protein homolog (ASPM) (Pongo pygmaeus (Bornean orangutan)).